Here is a 333-residue protein sequence, read N- to C-terminus: Phosphate acyltransferase (333 aa).

It belongs to the PlsX family. As to quaternary structure, homodimer. Probably interacts with PlsY.

It localises to the cytoplasm. It catalyses the reaction a fatty acyl-[ACP] + phosphate = an acyl phosphate + holo-[ACP]. It functions in the pathway lipid metabolism; phospholipid metabolism. Functionally, catalyzes the reversible formation of acyl-phosphate (acyl-PO(4)) from acyl-[acyl-carrier-protein] (acyl-ACP). This enzyme utilizes acyl-ACP as fatty acyl donor, but not acyl-CoA. In Bacillus subtilis (strain 168), this protein is Phosphate acyltransferase.